The chain runs to 334 residues: uncharacterized protein (334 aa).

S126 lines the substrate pocket. Catalysis depends on Y151, which acts as the Proton acceptor.

The protein belongs to the NAD(P)-dependent epimerase/dehydratase family. dTDP-glucose dehydratase subfamily.

This is an uncharacterized protein from Escherichia coli O111:H-.